Consider the following 444-residue polypeptide: Magnesium transporter MRS2-F (444 aa).

Residues 128-155 are disordered; sequence FTDMEGESSAVTSPFPALTSTTPNELEM. Over residues 145-155 the composition is skewed to polar residues; it reads LTSTTPNELEM. Positions 195 to 258 form a coiled coil; that stretch reads VCLESACRSL…QKVRDELEHL (64 aa). Residues 370–390 traverse the membrane as a helical segment; the sequence is GVMLSTATVVITAGVAVVGLF. A Required for magnesium transport activity motif is present at residues 391 to 393; sequence GMN. Residues 415–435 traverse the membrane as a helical segment; sequence FWETTLGTIAGCTVMYIVAMG.

Belongs to the CorA metal ion transporter (MIT) (TC 1.A.35.5) family.

The protein localises to the membrane. Its function is as follows. Magnesium transporter that may mediate the influx of magnesium. This is Magnesium transporter MRS2-F (MRS2-F) from Oryza sativa subsp. indica (Rice).